The sequence spans 70 residues: MKAGIHPDYAEITATCTCGNVIKINSTVGKDLHLDVCGACHPFYTGTQKVMDTGGRIDKFNKRFGALGKK.

4 residues coordinate Zn(2+): Cys16, Cys18, Cys37, and Cys40.

Belongs to the bacterial ribosomal protein bL31 family. Type A subfamily. Part of the 50S ribosomal subunit. Zn(2+) is required as a cofactor.

Binds the 23S rRNA. This chain is Large ribosomal subunit protein bL31, found in Shewanella halifaxensis (strain HAW-EB4).